A 628-amino-acid polypeptide reads, in one-letter code: DNA ligase (628 aa).

Residues 36 to 40 (DVEYD), 85 to 86 (SL), and E117 contribute to the NAD(+) site. K119 serves as the catalytic N6-AMP-lysine intermediate. The NAD(+) site is built by R140, E174, K309, and K333. Residues C427, C430, C446, and C452 each coordinate Zn(2+).

Belongs to the NAD-dependent DNA ligase family. LigA subfamily. The cofactor is Mg(2+). Mn(2+) is required as a cofactor.

It catalyses the reaction NAD(+) + (deoxyribonucleotide)n-3'-hydroxyl + 5'-phospho-(deoxyribonucleotide)m = (deoxyribonucleotide)n+m + AMP + beta-nicotinamide D-nucleotide.. Functionally, DNA ligase that catalyzes the formation of phosphodiester linkages between 5'-phosphoryl and 3'-hydroxyl groups in double-stranded DNA using NAD as a coenzyme and as the energy source for the reaction. It is essential for DNA replication and repair of damaged DNA. The chain is DNA ligase from Tropheryma whipplei (strain Twist) (Whipple's bacillus).